The primary structure comprises 440 residues: MDNDILKRLDPEVFEAIANETKRQTETLELIASENFTSKAVMEACGSVMTNKYAEGYPGKRYYGGCEFVDVAENLARDRAKKLFGCEYVNVQPHSGSSANMAVLFAVLKPGDAIMGLDLSHGGHLTHGSKVNFSGQFFDAHSYGVDKETGIIDMNKVEEMARRVKPKLIITGASAYSQGFDFKAFREVADKVGALLMADIAHPAGLVAAGLSANPMPHCHFVTTTTHKTLRGPRGGMIMMGKDFENPLGLTINTKNGSRVKMMSEVIDAEVMPGIQGGPLMHIIAGKAVAFGEALQPEFKAYAQQIKDNAAAMAAKFLAAGYHIVSGGTKNHLMLLDLRNKNVNGKVAENLLHEAGITVNKNMVPFDDKSPFVTSGIRIGTPAMTTRGMKVAEAEKIVEFIDRVISAANDANVADVCKAVRAEVRELCLGFPLNNYGSLV.

(6S)-5,6,7,8-tetrahydrofolate-binding positions include L119 and 123–125 (GHL). An N6-(pyridoxal phosphate)lysine modification is found at K228. 370 to 372 (SPF) contacts (6S)-5,6,7,8-tetrahydrofolate.

The protein belongs to the SHMT family. In terms of assembly, homodimer. Requires pyridoxal 5'-phosphate as cofactor.

It is found in the cytoplasm. It catalyses the reaction (6R)-5,10-methylene-5,6,7,8-tetrahydrofolate + glycine + H2O = (6S)-5,6,7,8-tetrahydrofolate + L-serine. It functions in the pathway one-carbon metabolism; tetrahydrofolate interconversion. Its pathway is amino-acid biosynthesis; glycine biosynthesis; glycine from L-serine: step 1/1. Functionally, catalyzes the reversible interconversion of serine and glycine with tetrahydrofolate (THF) serving as the one-carbon carrier. This reaction serves as the major source of one-carbon groups required for the biosynthesis of purines, thymidylate, methionine, and other important biomolecules. Also exhibits THF-independent aldolase activity toward beta-hydroxyamino acids, producing glycine and aldehydes, via a retro-aldol mechanism. The polypeptide is Serine hydroxymethyltransferase (Chlorobaculum tepidum (strain ATCC 49652 / DSM 12025 / NBRC 103806 / TLS) (Chlorobium tepidum)).